Reading from the N-terminus, the 445-residue chain is MVPPIIYKYKRRKDRRLGRDDDSSVMMTRRRPDSDFIEVSDENRSFALFKEDDEKNRDLGLVDDGSTNLVLQCHDDGCSLEKDNSNSLDDLFSGFVYKGVRRRKRDDFGSITTSNLVSPQIADDDDDSVSDSHIERQECSEFHVEVRRVSPYFQGSTVSQQSKEGCDSDSVCSKEGCSKVQAKVPRVSPYFQASTISQCDSDIVSSSQSGRNYRKGSSKRQVKVRRVSPYFQESTVSEQPNQAPKGLRNYFKVVKVSRYFHADGIQVNESQKEKSRNVRKTPIVSPVLSLSQKTDDVYLRKTPDNTWVPPRSPCNLLQEDHWHDPWRVLVICMLLNKTSGAQTRGVISDLFGLCTDAKTATEVKEEEIENLIKPLGLQKKRTKMIQRLSLEYLQESWTHVTQLHGVGKYAADAYAIFCNGNWDRVKPNDHMLNYYWDYLRIRYKL.

Asp-429 is a catalytic residue.

In terms of tissue distribution, isoform 1 and isoform 4: Expressed in leaves and flowers, but not in roots or stems.

The protein resides in the nucleus. Monofunctional DNA glycosylase targeting U:G and T:G mispairs. Excises uracil derivatives and exhibits a preference for a CpG sequence context, irrespective of the methylation status of the complementary strand. The activity follows a biphasic kinetics, with an initial burst of product accumulation followed by a slower phase. Specifically binds its reaction product. Triggers the base excision repair (BER) pathway. In Arabidopsis thaliana (Mouse-ear cress), this protein is Methyl-CpG-binding domain protein 4-like protein.